The chain runs to 841 residues: DNA ligase (841 aa).

NAD(+)-binding positions include 33-37 (DAQYD), 82-83 (SL), and glutamate 114. Lysine 116 functions as the N6-AMP-lysine intermediate in the catalytic mechanism. NAD(+) contacts are provided by arginine 137, glutamate 174, lysine 300, and lysine 324. Residues cysteine 418, cysteine 421, cysteine 436, and cysteine 442 each contribute to the Zn(2+) site. The BRCT domain occupies 758–841 (EKTGPLDGQT…AFLGEHGQQR (84 aa)).

Belongs to the NAD-dependent DNA ligase family. LigA subfamily. Mg(2+) is required as a cofactor. It depends on Mn(2+) as a cofactor.

It carries out the reaction NAD(+) + (deoxyribonucleotide)n-3'-hydroxyl + 5'-phospho-(deoxyribonucleotide)m = (deoxyribonucleotide)n+m + AMP + beta-nicotinamide D-nucleotide.. Functionally, DNA ligase that catalyzes the formation of phosphodiester linkages between 5'-phosphoryl and 3'-hydroxyl groups in double-stranded DNA using NAD as a coenzyme and as the energy source for the reaction. It is essential for DNA replication and repair of damaged DNA. The protein is DNA ligase of Xanthomonas oryzae pv. oryzae (strain KACC10331 / KXO85).